A 359-amino-acid polypeptide reads, in one-letter code: UDP-3-O-acylglucosamine N-acyltransferase (359 aa).

Residue His-256 is the Proton acceptor of the active site.

Belongs to the transferase hexapeptide repeat family. LpxD subfamily. In terms of assembly, homotrimer.

The catalysed reaction is a UDP-3-O-[(3R)-3-hydroxyacyl]-alpha-D-glucosamine + a (3R)-hydroxyacyl-[ACP] = a UDP-2-N,3-O-bis[(3R)-3-hydroxyacyl]-alpha-D-glucosamine + holo-[ACP] + H(+). Its pathway is bacterial outer membrane biogenesis; LPS lipid A biosynthesis. Its function is as follows. Catalyzes the N-acylation of UDP-3-O-acylglucosamine using 3-hydroxyacyl-ACP as the acyl donor. Is involved in the biosynthesis of lipid A, a phosphorylated glycolipid that anchors the lipopolysaccharide to the outer membrane of the cell. The sequence is that of UDP-3-O-acylglucosamine N-acyltransferase from Rhodopseudomonas palustris (strain HaA2).